Here is a 178-residue protein sequence, read N- to C-terminus: uncharacterized protein (178 aa).

Positions 9–173 (LTLRKMELED…IDVYMFSLLK (165 aa)) constitute an N-acetyltransferase domain.

This is an uncharacterized protein from Bacillus licheniformis.